A 380-amino-acid chain; its full sequence is Cytochrome b (380 aa).

Transmembrane regions (helical) follow at residues 34-54 (FGSL…LLAA), 78-99 (WLIR…YLHI), 114-134 (WNIG…GYVL), and 179-199 (FFAL…VHLT). Heme b is bound by residues histidine 84 and histidine 98. Residues histidine 183 and histidine 197 each coordinate heme b. Residue histidine 202 participates in a ubiquinone binding. A run of 4 helical transmembrane segments spans residues 227–247 (IKDI…ALFS), 289–309 (LGGV…PLLH), 321–341 (LSQI…WVGS), and 348–368 (FIII…VLFP).

It belongs to the cytochrome b family. In terms of assembly, the cytochrome bc1 complex contains 11 subunits: 3 respiratory subunits (MT-CYB, CYC1 and UQCRFS1), 2 core proteins (UQCRC1 and UQCRC2) and 6 low-molecular weight proteins (UQCRH/QCR6, UQCRB/QCR7, UQCRQ/QCR8, UQCR10/QCR9, UQCR11/QCR10 and a cleavage product of UQCRFS1). This cytochrome bc1 complex then forms a dimer. Heme b is required as a cofactor.

It localises to the mitochondrion inner membrane. Its function is as follows. Component of the ubiquinol-cytochrome c reductase complex (complex III or cytochrome b-c1 complex) that is part of the mitochondrial respiratory chain. The b-c1 complex mediates electron transfer from ubiquinol to cytochrome c. Contributes to the generation of a proton gradient across the mitochondrial membrane that is then used for ATP synthesis. The polypeptide is Cytochrome b (MT-CYB) (Paradisaea rubra (Red bird of paradise)).